We begin with the raw amino-acid sequence, 645 residues long: Aspartate--tRNA ligase, mitochondrial (645 aa).

The N-terminal 47 residues, 1-47, are a transit peptide targeting the mitochondrion; the sequence is MYFPSWLSQLYRGLSRPIRRTTQPIWGSLYRSLLQSSQRRIPEFSSF. Position 219 is a phosphothreonine (Thr219). Ser242 bears the Phosphoserine mark. The tract at residues 244 to 247 is aspartate; that stretch reads QQFK. L-aspartate is bound at residue Arg266. 266-268 is an ATP binding site; it reads RDE. Lys382 is modified (N6-acetyllysine). Glu535 serves as a coordination point for ATP. An L-aspartate-binding site is contributed by Arg542. 584–587 lines the ATP pocket; it reads GLDR.

This sequence belongs to the class-II aminoacyl-tRNA synthetase family. Type 1 subfamily. Homodimer.

Its subcellular location is the mitochondrion matrix. It is found in the mitochondrion membrane. It catalyses the reaction tRNA(Asp) + L-aspartate + ATP = L-aspartyl-tRNA(Asp) + AMP + diphosphate. Functionally, catalyzes the attachment of aspartate to tRNA(Asp) in a two-step reaction: aspartate is first activated by ATP to form Asp-AMP and then transferred to the acceptor end of tRNA(Asp). This Homo sapiens (Human) protein is Aspartate--tRNA ligase, mitochondrial (DARS2).